Consider the following 401-residue polypeptide: ATP phosphoribosyltransferase regulatory subunit (401 aa).

This sequence belongs to the class-II aminoacyl-tRNA synthetase family. HisZ subfamily. Heteromultimer composed of HisG and HisZ subunits.

The protein resides in the cytoplasm. Its pathway is amino-acid biosynthesis; L-histidine biosynthesis; L-histidine from 5-phospho-alpha-D-ribose 1-diphosphate: step 1/9. Functionally, required for the first step of histidine biosynthesis. May allow the feedback regulation of ATP phosphoribosyltransferase activity by histidine. The sequence is that of ATP phosphoribosyltransferase regulatory subunit from Cyanothece sp. (strain PCC 7425 / ATCC 29141).